Consider the following 501-residue polypeptide: MDSRLARLTTLQTSAGEELRRTSIIGTIGPKTNNPETLVALRKAGLNIVRMNFSHGSYEYHKSVIDNARKSEELYPGRPLAIALDTKGPEIRTGTTTNEVDYPIPPNHEMIFTTDDKYAKACDDKIMYLDYKNITKVISAGRIIYVDDGVLSFEVLQVVDDKTLKVKSLNAGKICSHKGVNLPGTDVDLPALSEKDKADLRFGVENGVHMIFASFIRTAQDVLTIREVLGEDGKDIKIVVKIENQQGVNNFDEILKVTDAVMVARGDLGIEIPAPEVLAVQKKLIAKSNLAGKPVICATQMLESMTYNPRPTRAEVSDVGNAVLDGADCVMLSGETAKGNYPINAVTTMAETALIAEQAIAYLPNYDDIRNCTPKPTSTTETVAASAVAAVFEQKAKAIIVLSTSGTTARLVSKYRPNCPIILVTRNARTARFSHLYRGVFPFVYEKESVSDWTEDVEARLNFGIEQAIEFGILKKGDTYVSIQGFKAGVGHSNTLQVSTA.

Arg50 contacts substrate. Asn52, Ser54, Asp85, and Thr86 together coordinate K(+). 52-55 (NFSH) is a binding site for ATP. ATP is bound by residues Arg92 and Lys178. Glu243 lines the Mg(2+) pocket. Substrate-binding residues include Gly266, Asp267, and Thr299. Residue Asp267 coordinates Mg(2+).

The protein belongs to the pyruvate kinase family. As to quaternary structure, homotetramer. Requires Mg(2+) as cofactor. K(+) is required as a cofactor.

It carries out the reaction pyruvate + ATP = phosphoenolpyruvate + ADP + H(+). It participates in carbohydrate degradation; glycolysis; pyruvate from D-glyceraldehyde 3-phosphate: step 5/5. In Candida glabrata (strain ATCC 2001 / BCRC 20586 / JCM 3761 / NBRC 0622 / NRRL Y-65 / CBS 138) (Yeast), this protein is Pyruvate kinase 1 (PYK1).